The chain runs to 273 residues: Large ribosomal subunit protein uL2 (273 aa).

Disordered regions lie at residues 28-53 (KPFA…TTRH) and 221-273 (RGTA…RRSK). The span at 39–48 (KSGGRNNNGR) shows a compositional bias: low complexity.

Belongs to the universal ribosomal protein uL2 family. In terms of assembly, part of the 50S ribosomal subunit. Forms a bridge to the 30S subunit in the 70S ribosome.

In terms of biological role, one of the primary rRNA binding proteins. Required for association of the 30S and 50S subunits to form the 70S ribosome, for tRNA binding and peptide bond formation. It has been suggested to have peptidyltransferase activity; this is somewhat controversial. Makes several contacts with the 16S rRNA in the 70S ribosome. This is Large ribosomal subunit protein uL2 from Salmonella agona (strain SL483).